The chain runs to 3011 residues: Genome polyprotein (3011 aa).

S2 is subject to N-acetylserine; by host. Residues 2 to 23 (STNPKPQRKTKRNTNRRPQNVK) form an interaction with STAT1 region. Residues 2–58 (STNPKPQRKTKRNTNRRPQNVKFPGGGQIVGGVCLLPRRGPRVGVRATRKTSERSQP) are interaction with EIF2AK2/PKR. An interaction with DDX3X region spans residues 2–59 (STNPKPQRKTKRNTNRRPQNVKFPGGGQIVGGVCLLPRRGPRVGVRATRKTSERSQPR). The segment at 2-75 (STNPKPQRKT…PKARRPEGRS (74 aa)) is disordered. The Cytoplasmic portion of the chain corresponds to 2–168 (STNPKPQRKT…EDGVNYATGN (167 aa)). 2 consecutive short sequence motifs (nuclear localization signal) follow at residues 5 to 13 (PKPQRKTKR) and 38 to 43 (PRRGPR). Over residues 7–16 (PQRKTKRNTN) the composition is skewed to basic residues. S53 carries the post-translational modification Phosphoserine; by host. 2 consecutive short sequence motifs (nuclear localization signal) follow at residues 58 to 64 (PRGRRQP) and 66 to 71 (PKARRP). The span at 58–68 (PRGRRQPIPKA) shows a compositional bias: basic residues. Residue S99 is modified to Phosphoserine; by host. Residues 112–152 (PRRRSRNLGKVIDTLTCGFADLMGYIPLVGAPLGGAARALA) form an important for endoplasmic reticulum and mitochondrial localization region. A Phosphoserine; by host PKA modification is found at S116. The interaction with APOA2 stretch occupies residues 122–173 (VIDTLTCGFADLMGYIPLVGAPLGGAARALAHGVRVLEDGVNYATGNLPGCS). Positions 164–167 (YATG) are important for lipid droplets localization. A helical membrane pass occupies residues 169–189 (LPGCSFSIFLLALLSCLTVPA). Residues 178-191 (LLALLSCLTVPASA) constitute a propeptide, ER anchor for the core protein, removed in mature form by host signal peptidase. Topologically, residues 190–358 (SAVEVRNSSG…AGAHWGVLAG (169 aa)) are lumenal. N-linked (GlcNAc...) asparagine; by host glycosylation is found at N196, N209, and N234. The segment at 265–296 (IVGAAAFCSAMYVGDLCGSIFLVGQLFTLSPR) is important for fusion. N-linked (GlcNAc...) asparagine; by host glycosylation is present at N305. Residues 359 to 379 (PAYYSMVGNWAKVLVVLLLFA) traverse the membrane as a helical segment. Residues 380–725 (GVDATTQVTG…WEYVVLLFLL (346 aa)) lie on the Lumenal side of the membrane. The tract at residues 385–411 (TQVTGGTAGRNAYRLASLFSTGPSQNI) is HVR1. N-linked (GlcNAc...) (high mannose) asparagine; by host glycosylation is found at N417, N423, N430, and N448. 3 disulfide bridges follow: C429-C552, C486-C494, and C503-C508. Residues 474 to 479 (YGGKAS) are HVR2. Residues 480-493 (NDQRPYCWHYAPRP) form a CD81-binding 1 region. N532 carries an N-linked (GlcNAc...) (high mannose) asparagine; by host glycan. N540 carries N-linked (GlcNAc...) asparagine; by host glycosylation. The segment at 544–551 (PPIGNWFG) is CD81-binding 2. A glycan (N-linked (GlcNAc...) (high mannose) asparagine; by host) is linked at N556. Disulfide bonds link C564/C569, C581/C585, C597/C620, and C607/C644. Residues N623 and N645 are each glycosylated (N-linked (GlcNAc...) (high mannose) asparagine; by host). A disulfide bond links C652 and C677. Positions 660 to 671 (AELSPLLLSTTQ) are PKR/eIF2-alpha phosphorylation homology domain (PePHD). A helical membrane pass occupies residues 726–746 (LADARICACLWMMLLISQVEA). The Lumenal segment spans residues 747–757 (ALENLIVLNAA). The helical transmembrane segment at 758–778 (SLAGTHGIVPFFIFFCAAWYL) threads the bilayer. Over 779-781 (KGK) the chain is Cytoplasmic. The chain crosses the membrane as a helical span at residues 782-803 (WAPGLVYSVYGMWPLLLLLLAL). The Lumenal segment spans residues 804–813 (PQRAYALDQE). Residues 814-834 (LAASCGAVVFISLAVLTLSPY) traverse the membrane as a helical segment. Residues 835 to 838 (YKQY) lie on the Cytoplasmic side of the membrane. The chain crosses the membrane as a helical span at residues 839-859 (MARGIWWLQYMLTRAEALLHV). Residues 860 to 881 (WVPSLNARGGRDGAILLMCVLH) are Lumenal-facing. The helical transmembrane segment at 882-902 (PHLLFDITKIMLAILGPLWIL) threads the bilayer. One can recognise a Peptidase C18 domain in the interval 903 to 1026 (QASLLRVPYF…ALTDKGWRLL (124 aa)). The Cytoplasmic segment spans residues 903-1657 (QASLLRVPYF…CMSADLEVVT (755 aa)). The tract at residues 904–1206 (ASLLRVPYFV…PVESLETTMR (303 aa)) is protease NS2-3. C922 is lipidated: S-palmitoyl cysteine; by host. Positions 929 to 949 (AGGHYVQMALLKLGALTGTYI) are interaction with host SCPS1. Catalysis depends on for protease NS2 activity; shared with dimeric partner residues H952, E972, and C993. Positions 1027–1208 (APITAYAQQT…ESLETTMRSP (182 aa)) constitute a Peptidase S29 domain. Catalysis depends on charge relay system; for serine protease NS3 activity residues H1083 and D1107. Zn(2+)-binding residues include C1123 and C1125. Residue S1165 is the Charge relay system; for serine protease NS3 activity of the active site. Positions 1171 and 1175 each coordinate Zn(2+). Residues 1217–1369 (PTVPQSYQVA…SNIEEVALSA (153 aa)) form the Helicase ATP-binding domain. Residue 1230-1237 (APTGSGKS) participates in ATP binding. Residues S1237 and E1317 each contribute to the Mg(2+) site. A DECH box motif is present at residues 1316–1319 (DECH). The segment at 1486 to 1497 (QRRGRTGRGKHG) is RNA-binding. A helical membrane pass occupies residues 1658 to 1678 (STWVLVGGVLAALAAYCLSTG). An NS3-binding region spans residues 1679-1690 (SVVIVGRIILGG). Residues 1679-1805 (SVVIVGRIIL…AVTSPLTTQQ (127 aa)) lie on the Cytoplasmic side of the membrane. Residues 1806-1824 (TLFFNILGGWVAAQLASPA) form a helical membrane-spanning segment. At 1825 to 1828 (AATA) the chain is on the lumenal side. A helical membrane pass occupies residues 1829–1849 (FVGAGITGAVVGSVGLGKVLV). D1850 is a topological domain (cytoplasmic). A helical transmembrane segment spans residues 1851–1871 (IIAGYGAGVAGALVAFKIMSG). Residues 1872–1881 (ETPTTEDLVN) lie on the Lumenal side of the membrane. Residues 1882-1902 (LLPAILSPGALVVGVVCAAIL) traverse the membrane as a helical segment. Over 1903–1972 (RRHVGPGEGA…WISSDCIAPC (70 aa)) the chain is Cytoplasmic. S-palmitoyl cysteine; by host attachment occurs at residues C1968 and C1972. Residues 1973–2002 (ASSWLKDVWDWICEVLSDFKNWLKAKLVPQ) lie within the membrane without spanning it. Residues 2003 to 2990 (LPGIPFVSCQ…YHSVSHARPR (988 aa)) are Cytoplasmic-facing. Zn(2+) contacts are provided by C2011, C2029, C2031, and C2052. Residues 2120 to 2208 (EFFTEVDGVR…ASSSASQLSA (89 aa)) are FKBP8-binding. The segment at 2120-2332 (EFFTEVDGVR…PVPPPRRKRT (213 aa)) is transcriptional activation. Residues 2135 to 2139 (PPCKP) form an interaction with non-structural protein 4A region. The interval 2187–2219 (ARRLKRGSPPSLASSSASQLSAPSLKATCTTHH) is disordered. An interaction with host SKP2 region spans residues 2189–2441 (RLKRGSPPSL…TPCASEEAKL (253 aa)). A Phosphoserine; by host; in p56 modification is found at S2194. The span at 2194–2211 (SPPSLASSSASQLSAPSL) shows a compositional bias: low complexity. 5 positions are modified to phosphoserine; by host; in p58: S2197, S2201, S2204, S2207, and S2210. Residues 2210–2249 (SLKATCTTHHDSPDADLIEANLLWRQEMGGNITRVESENK) are ISDR. The segment at 2210–2275 (SLKATCTTHH…REISIPAEIL (66 aa)) is interaction with EIF2AK2/PKR. Positions 2249–2306 (KIVVLDSFDPLVAEEDDREISIPAEILRKFKQFPPAMPIWARPDYNPPLVEPWKRPDY) are NS4B-binding. Positions 2322–2325 (TPVP) match the SH3-binding motif. The short motif at 2326–2334 (PPRRKRTVV) is the Nuclear localization signal element. Residue K2350 forms a Glycyl lysine isopeptide (Lys-Gly) (interchain with G-Cter in ubiquitin) linkage. Over residues 2352-2369 (FGSSTTSGVTSGEATESS) the composition is skewed to low complexity. Positions 2352-2409 (FGSSTTSGVTSGEATESSPAPSCGGELDSEAESYSSMPPLEGEPGDPDLSDGSWSTVS) are disordered. The segment at 2354–2377 (SSTTSGVTSGEATESSPAPSCGGE) is V3. A phosphoserine; by host mark is found at S2449 and S2462. A RdRp catalytic domain is found at 2634–2752 (PMGFSYDTRC…ICESAGVQED (119 aa)). Positions 2640, 2738, and 2739 each coordinate Mg(2+). The chain crosses the membrane as a helical span at residues 2991-3011 (LFLWCLLLLSVGVGIYLLPNR).

This sequence belongs to the hepacivirus polyprotein family. Homooligomer. Interacts with E1 (via C-terminus). Interacts with the non-structural protein 5A. Interacts (via N-terminus) with host STAT1 (via SH2 domain); this interaction results in decreased STAT1 phosphorylation and ubiquitin-mediated proteasome-dependent STAT1 degradation, leading to decreased IFN-stimulated gene transcription. Interacts with host STAT3; this interaction constitutively activates STAT3. Interacts with host LTBR receptor. Interacts with host TNFRSF1A receptor and possibly induces apoptosis. Interacts with host HNRPK. Interacts with host YWHAE. Interacts with host UBE3A/E6AP. Interacts with host DDX3X. Interacts with host APOA2. Interacts with host RXRA protein. Interacts with host SP110 isoform 3/Sp110b; this interaction sequesters the transcriptional corepressor SP110 away from the nucleus. Interacts with host CREB3 nuclear transcription protein; this interaction triggers cell transformation. Interacts with host ACY3. Interacts with host C1QR1. Interacts with host RBM24; this interaction, which enhances the interaction of the mature core protein with 5'-UTR, may inhibit viral translation and favor replication. Interacts with host EIF2AK2/PKR; this interaction induces the autophosphorylation of EIF2AK2. Part of the viral assembly initiation complex composed of NS2, E1, E2, NS3, NS4A, NS5A and the mature core protein. As to quaternary structure, forms a heterodimer with envelope glycoprotein E2. Interacts with mature core protein. Interacts with protease NS2. The heterodimer E1/E2 interacts with host CLDN1; this interaction plays a role in viral entry into host cell. Interacts with host SPSB2 (via C-terminus). Part of the viral assembly initiation complex composed of NS2, E1, E2, NS3, NS4A, NS5A and the mature core protein. Interacts with host NEURL3; this interaction prevents E1 binding to glycoprotein E2. In terms of assembly, forms a heterodimer with envelope glycoprotein E1. Interacts with host CD81 and SCARB1 receptors; these interactions play a role in viral entry into host cell. Interacts with host EIF2AK2/PKR; this interaction inhibits EIF2AK2 and probably allows the virus to evade the innate immune response. Interacts with host CD209/DC-SIGN and CLEC4M/DC-SIGNR. Interact with host SPCS1; this interaction is essential for viral particle assembly. Interacts with protease NS2. The heterodimer E1/E2 interacts with host CLDN1; this interaction plays a role in viral entry into host cell. Part of the viral assembly initiation complex composed of NS2, E1, E2, NS3, NS4A, NS5A and the mature core protein. Interacts with host SLC3A2/4F2hc; the interaction may facilitate viral entry into host cell. Interacts with human PLSCR1. Homohexamer. Homoheptamer. Interacts with protease NS2. As to quaternary structure, homodimer. Interacts with host SPCS1; this interaction is essential for viral particle assembly. Interacts with envelope glycoprotein E1. Interacts with envelope glycoprotein E2. Interacts with viroporin p7. Interacts with serine protease/helicase NS3. Part of the replication complex composed of NS2, NS3, NS4A, NS4B, NS5A and the RNA-directed RNA polymerase embedded in an ER-derived membranous web. Part of the viral assembly initiation complex composed of NS2, E1, E2, NS3, NS4A, NS5A and the mature core protein. In terms of assembly, interacts with protease NS2. Interacts with non-structural protein 4A; this interaction stabilizes the folding of NS3 serine protease. NS3-NS4A interaction is essential for NS3 activation and allows membrane anchorage of the latter. NS3/NS4A complex also prevents phosphorylation of host IRF3, thus preventing the establishment of dsRNA induced antiviral state. Interacts with host MAVS; this interaction leads to the cleavage and inhibition of host MAVS. Interacts with host TICAM1; this interaction leads to the cleavage and inhibition of host TICAM1. Interacts with host TANK-binding kinase/TBK1; this interaction results in the inhibition of the association between TBK1 and IRF3, which leads to the inhibition of IRF3 activation. Interacts with host RBM24. Part of the replication complex composed of NS2, NS3, NS4A, NS4B, NS5A and the RNA-directed RNA polymerase embedded in an ER-derived membranous web. Part of the viral assembly initiation complex composed of NS2, E1, E2, NS3, NS4A, NS5A and the mature core protein. Interacts with NS3 serine protease; this interaction stabilizes the folding of NS3 serine protease. NS3-NS4A interaction is essential for NS3 activation and allows membrane anchorage of the latter. Interacts with non-structural protein 5A (via N-terminus). Part of the replication complex composed of NS2, NS3, NS4A, NS4B, NS5A and the RNA-directed RNA polymerase embedded in an ER-derived membranous web. Part of the viral assembly initiation complex composed of NS2, E1, E2, NS3, NS4A, NS5A and the mature core protein. As to quaternary structure, homomultimer. Interacts with non-structural protein NS5A. Interacts with host PLA2G4C; this interaction likely initiates the recruitment of replication complexes to lipid droplets. Interacts with host STING; this interaction disrupts the interaction between STING and TBK1 thereby suppressing the interferon signaling. Part of the replication complex composed of NS2, NS3, NS4A, NS4B, NS5A and the RNA-directed RNA polymerase embedded in an ER-derived membranous web. In terms of assembly, monomer. Homodimer; dimerization is required for RNA-binding. Interacts with the mature core protein. Interacts (via N-terminus) with non-structural protein 4A. Interacts with non-structural protein 4B. Interacts (via region D2) with RNA-directed RNA polymerase. Part of the viral assembly initiation complex composed of NS2, E1, E2, NS3, NS4A, NS5A and the mature core protein. Part of the replication complex composed of NS2, NS3, NS4A, NS4B, NS5A and the RNA-directed RNA polymerase embedded in an ER-derived membranous web. Interacts with host GRB2. Interacts with host BIN1. Interacts with host PIK3R1. Interacts with host SRCAP. Interacts with host FKBP8. Interacts (via C-terminus) with host VAPB (via MSP domain). Interacts with host EIF2AK2/PKR; this interaction leads to disruption of EIF2AK2 dimerization by NS5A and probably allows the virus to evade the innate immune response. Interacts (via N-terminus) with host PACSIN2 (via N-terminus); this interaction attenuates protein kinase C alpha-mediated phosphorylation of PACSIN2 by disrupting the interaction between PACSIN2 and PRKCA. Interacts (via N-terminus) with host SRC kinase (via SH2 domain). Interacts with most Src-family kinases. Interacts with host IFI27 and SKP2; promotes the ubiquitin-mediated proteasomal degradation of NS5A. Interacts with host GPS2. Interacts with host TNFRSF21; this interaction allows the modulation by the virus of JNK, p38 MAPK, STAT3, and Akt signaling pathways in a DR6-dependent manner. Interacts (via N-terminus) with host CIDEB (via N-terminus); this interaction seems to regulate the association of HCV particles with APOE. Interacts with host CHKA/Choline Kinase-alpha; CHKA bridges host PI4KA and NS5A and potentiates NS5A-stimulated PI4KA activity, which then facilitates the targeting of the ternary complex to the ER for viral replication. Interacts with host SPSB2 (via C-terminus); this interaction targets NS5A for ubiquitination and degradation. Interacts with host RAB18; this interaction may promote the association of NS5A and other replicase components with lipid droplets. Interacts (via region D2) with host PPIA/CYPA; the interaction stimulates RNA-binding ability of NS5A and is dependent on the peptidyl-prolyl cis-trans isomerase activity of PPIA/CYPA. Interacts with host TRIM14; this interaction induces the degradation of NS5A. Homooligomer. Interacts with non-structural protein 5A. Interacts with host VAPB. Interacts with host PRK2/PKN2. Interacts with host HNRNPA1 and SEPT6; these interactions facilitate viral replication. Part of the replication complex composed of NS2, NS3, NS4A, NS4B, NS5A and the RNA-directed RNA polymerase. Zn(2+) is required as a cofactor. It depends on Mg(2+) as a cofactor. Post-translationally, specific enzymatic cleavages in vivo yield mature proteins. The structural proteins, core, E1, E2 and p7 are produced by proteolytic processing by host signal peptidases. The core protein precursor is synthesized as a 23 kDa, which is retained in the ER membrane through the hydrophobic signal peptide. Cleavage by the signal peptidase releases the 21 kDa mature core protein. The cleavage of the core protein precursor occurs between aminoacids 176 and 188 but the exact cleavage site is not known. Some degraded forms of the core protein appear as well during the course of infection. The other proteins (p7, NS2, NS3, NS4A, NS4B, NS5A and NS5B) are cleaved by the viral proteases. Autoprocessing between NS2 and NS3 is mediated by the NS2 cysteine protease catalytic domain and regulated by the NS3 N-terminal domain. Phosphorylated by host PKC and PKA. In terms of processing, ubiquitinated; mediated by UBE3A and leading to core protein subsequent proteasomal degradation. Post-translationally, highly N-glycosylated. Palmitoylation is required for NS2/3 autoprocessing and E2 recruitment to membranes. In terms of processing, palmitoylated. This modification may play a role in its polymerization or in protein-protein interactions. Post-translationally, phosphorylated on serines in a basal form termed p56. p58 is a hyperphosphorylated form of p56. p56 and p58 coexist in the cell in roughly equivalent amounts. Hyperphosphorylation is dependent on the presence of NS4A. Host CSNK1A1/CKI-alpha or RPS6KB1 kinases may be responsible for NS5A phosphorylation. Tyrosine phosphorylation is essential for the interaction with host SRC. In terms of processing, the N-terminus is phosphorylated by host PRK2/PKN2.

It localises to the host endoplasmic reticulum membrane. Its subcellular location is the host mitochondrion membrane. The protein resides in the virion. It is found in the host cytoplasm. The protein localises to the host nucleus. It localises to the host lipid droplet. Its subcellular location is the virion membrane. The protein resides in the host mitochondrion. It is found in the host cell membrane. The protein localises to the host perinuclear region. It carries out the reaction Hydrolysis of four peptide bonds in the viral precursor polyprotein, commonly with Asp or Glu in the P6 position, Cys or Thr in P1 and Ser or Ala in P1'.. The enzyme catalyses a ribonucleoside 5'-triphosphate + H2O = a ribonucleoside 5'-diphosphate + phosphate + H(+). The catalysed reaction is ATP + H2O = ADP + phosphate + H(+). It catalyses the reaction RNA(n) + a ribonucleoside 5'-triphosphate = RNA(n+1) + diphosphate. With respect to regulation, inhibited by the antiviral drug hexamethylene amiloride. Inhibition by amantadine appears to be genotype-dependent. Also inhibited by long-alkyl-chain iminosugar derivatives. Its activity is regulated as follows. Activity is up-regulated by PRK2/PKN2-mediated phosphorylation. Its function is as follows. Packages viral RNA to form a viral nucleocapsid, and promotes virion budding. Participates in the viral particle production as a result of its interaction with the non-structural protein 5A. Binds RNA and may function as a RNA chaperone to induce the RNA structural rearrangements taking place during virus replication. Modulates viral translation initiation by interacting with viral IRES and 40S ribosomal subunit. Affects various cell signaling pathways, host immunity and lipid metabolism. Prevents the establishment of cellular antiviral state by blocking the interferon-alpha/beta (IFN-alpha/beta) and IFN-gamma signaling pathways and by blocking the formation of phosphorylated STAT1 and promoting ubiquitin-mediated proteasome-dependent degradation of STAT1. Activates STAT3 leading to cellular transformation. Regulates the activity of cellular genes, including c-myc and c-fos. May repress the promoter of p53, and sequester CREB3 and SP110 isoform 3/Sp110b in the cytoplasm. Represses cell cycle negative regulating factor CDKN1A, thereby interrupting an important check point of normal cell cycle regulation. Targets transcription factors involved in the regulation of inflammatory responses and in the immune response: suppresses TNF-induced NF-kappa-B activation, and activates AP-1. Binds to dendritic cells (DCs) via C1QR1, resulting in down-regulation of T-lymphocytes proliferation. Alters lipid metabolism by interacting with hepatocellular proteins involved in lipid accumulation and storage. Induces up-regulation of FAS promoter activity, and thereby contributes to the increased triglyceride accumulation in hepatocytes (steatosis). Functionally, forms a heterodimer with envelope glycoprotein E2, which mediates virus attachment to the host cell, virion internalization through clathrin-dependent endocytosis and fusion with host membrane. Fusion with the host cell is most likely mediated by both E1 and E2, through conformational rearrangements of the heterodimer required for fusion rather than a classical class II fusion mechanism. E1/E2 heterodimer binds host apolipoproteins such as APOB and ApoE thereby forming a lipo-viro-particle (LVP). APOE associated to the LVP allows the initial virus attachment to cell surface receptors such as the heparan sulfate proteoglycans (HSPGs), syndecan-1 (SDC1), syndecan-1 (SDC2), the low-density lipoprotein receptor (LDLR) and scavenger receptor class B type I (SCARB1). The cholesterol transfer activity of SCARB1 allows E2 exposure and binding of E2 to SCARB1 and the tetraspanin CD81. E1/E2 heterodimer binding on CD81 activates the epithelial growth factor receptor (EGFR) signaling pathway. Diffusion of the complex E1-E2-EGFR-SCARB1-CD81 to the cell lateral membrane allows further interaction with Claudin 1 (CLDN1) and occludin (OCLN) to finally trigger HCV entry. In terms of biological role, forms a heterodimer with envelope glycoprotein E1, which mediates virus attachment to the host cell, virion internalization through clathrin-dependent endocytosis and fusion with host membrane. Fusion with the host cell is most likely mediated by both E1 and E2, through conformational rearrangements of the heterodimer required for fusion rather than a classical class II fusion mechanism. The interaction between envelope glycoprotein E2 and host apolipoprotein E/APOE allows the proper assembly, maturation and infectivity of the viral particles. This interaction is probably promoted via the up-regulation of cellular autophagy by the virus. E1/E2 heterodimer binds host apolipoproteins such as APOB and APOE thereby forming a lipo-viro-particle (LVP). APOE associated to the LVP allows the initial virus attachment to cell surface receptors such as the heparan sulfate proteoglycans (HSPGs), syndecan-1 (SDC1), syndecan-1 (SDC2), the low-density lipoprotein receptor (LDLR) and scavenger receptor class B type I (SCARB1). The cholesterol transfer activity of SCARB1 allows E2 exposure and binding of E2 to SCARB1 and the tetraspanin CD81. E1/E2 heterodimer binding on CD81 activates the epithelial growth factor receptor (EGFR) signaling pathway. Diffusion of the complex E1-E2-EGFR-SCARB1-CD81 to the cell lateral membrane allows further interaction with Claudin 1 (CLDN1) and occludin (OCLN) to finally trigger HCV entry. Inhibits host EIF2AK2/PKR activation, preventing the establishment of an antiviral state. Viral ligand for CD209/DC-SIGN and CLEC4M/DC-SIGNR, which are respectively found on dendritic cells (DCs), and on liver sinusoidal endothelial cells and macrophage-like cells of lymph node sinuses. These interactions allow the capture of circulating HCV particles by these cells and subsequent facilitated transmission to permissive cells such as hepatocytes and lymphocyte subpopulations. The interaction between E2 and host amino acid transporter complex formed by SLC3A2 and SLC7A5/LAT1 may facilitate viral entry into host cell. Ion channel protein that acts as a viroporin and plays an essential role in the assembly, envelopment and secretion of viral particles. Regulates the host cell secretory pathway, which induces the intracellular retention of viral glycoproteins and favors assembly of viral particles. Creates a pore in acidic organelles and releases Ca(2+) and H(+) in the cytoplasm of infected cells, leading to a productive viral infection. High levels of cytoplasmic Ca(2+) may trigger membrane trafficking and transport of viral ER-associated proteins to viroplasms, sites of viral genome replication. This ionic imbalance induces the assembly of the inflammasome complex, which triggers the maturation of pro-IL-1beta into IL-1beta through the action of caspase-1. Targets also host mitochondria and induces mitochondrial depolarization. In addition of its role as a viroporin, acts as a lipid raft adhesion factor. Its function is as follows. Cysteine protease required for the proteolytic auto-cleavage between the non-structural proteins NS2 and NS3. The N-terminus of NS3 is required for the function of NS2 protease (active region NS2-3). Promotes the initiation of viral particle assembly by mediating the interaction between structural and non-structural proteins. Functionally, displays three enzymatic activities: serine protease with a chymotrypsin-like fold, NTPase and RNA helicase. NS3 serine protease, in association with NS4A, is responsible for the cleavages of NS3-NS4A, NS4A-NS4B, NS4B-NS5A and NS5A-NS5B. The NS3/NS4A complex prevents phosphorylation of host IRF3, thus preventing the establishment of dsRNA induced antiviral state. The NS3/NS4A complex induces host amino acid transporter component SLC3A2, thus contributing to HCV propagation. NS3 RNA helicase binds to RNA and unwinds both dsDNA and dsRNA in the 3' to 5' direction, and likely resolves RNA complicated stable secondary structures in the template strand. Binds a single ATP and catalyzes the unzipping of a single base pair of dsRNA. Inhibits host antiviral proteins TBK1 and IRF3 thereby preventing the establishment of an antiviral state. Cleaves host MAVS/CARDIF thereby preventing the establishment of an antiviral state. Cleaves host TICAM1/TRIF, thereby disrupting TLR3 signaling and preventing the establishment of an antiviral state. In terms of biological role, induces a specific membrane alteration that serves as a scaffold for the virus replication complex. This membrane alteration gives rise to the so-called ER-derived membranous web that contains the replication complex. NS4B self-interaction contributes to its function in membranous web formation. Promotes host TRIF protein degradation in a CASP8-dependent manner thereby inhibiting host TLR3-mediated interferon signaling. Disrupts the interaction between STING and TBK1 contributing to the inhibition of interferon signaling. Phosphorylated protein that is indispensable for viral replication and assembly. Both hypo- and hyperphosphorylated states are required for the viral life cycle. The hyperphosphorylated form of NS5A is an inhibitor of viral replication. Involved in RNA-binding and especially in binding to the viral genome. Zinc is essential for RNA-binding. Participates in the viral particle production as a result of its interaction with the mature viral core protein. Its interaction with host VAPB may target the viral replication complex to vesicles. Down-regulates viral IRES translation initiation. Mediates interferon resistance, presumably by interacting with and inhibiting host EIF2AK2/PKR. Prevents BIN1-induced apoptosis. Acts as a transcriptional activator of some host genes important for viral replication when localized in the nucleus. Via the interaction with host PACSIN2, modulates lipid droplet formation in order to promote virion assembly. Modulates TNFRSF21/DR6 signaling pathway for viral propagation. Its function is as follows. RNA-dependent RNA polymerase that performs primer-template recognition and RNA synthesis during viral replication. Initiates RNA transcription/replication at a flavin adenine dinucleotide (FAD), resulting in a 5'- FAD cap on viral RNAs. In this way, recognition of viral 5' RNA by host pattern recognition receptors can be bypassed, thereby evading activation of antiviral pathways. The chain is Genome polyprotein from Hepatitis C virus genotype 1c (isolate India) (HCV).